Reading from the N-terminus, the 134-residue chain is Small ribosomal subunit protein bS16 (134 aa).

The interval 79–134 (AGIAKRPSRNNPTKGEPGKKAQERLALAKQAEEEASAKAAEAAAAAAAPAEEAASE) is disordered. The segment covering 115 to 134 (AKAAEAAAAAAAPAEEAASE) has biased composition (low complexity).

This sequence belongs to the bacterial ribosomal protein bS16 family.

The protein is Small ribosomal subunit protein bS16 of Brucella abortus (strain S19).